Here is a 457-residue protein sequence, read N- to C-terminus: Peptidyl-prolyl cis-trans isomerase FKBP5 (457 aa).

Met-1 carries the post-translational modification N-acetylmethionine. The segment covering 1–11 (MTTDEGAKSSR) has biased composition (basic and acidic residues). The interval 1–28 (MTTDEGAKSSRENPAATVAEQGEDVTSK) is disordered. Lys-28 is subject to N6-acetyllysine. PPIase FKBP-type domains lie at 50-138 (GDKV…LNFK) and 165-251 (GARV…KSFE). TPR repeat units follow at residues 268-301 (AAIV…LEME), 317-350 (LAAF…DSAN), and 351-384 (EKGL…NPQN). Residues 424 to 457 (EANKAVSKKTSEGVTNEKLTVSHAVEEEKPEGHV) are disordered. Ser-445 is modified (phosphoserine). Residues 447 to 457 (AVEEEKPEGHV) are compositionally biased toward basic and acidic residues.

As to quaternary structure, part of a heteromultimeric cytoplasmic complex with HSP90AA1, HSPA1A/HSPA1B and steroid receptors. Upon ligand binding dissociates from the complex and FKBP4 takes its place. Interacts with functionally mature heterooligomeric progesterone receptor complexes along with HSP90 and TEBP. Interacts with NR3C1. Interacts with Akt/AKT1 and PHLPP1; enhancing dephosphorylation and subsequent activation of Akt/AKT1. Interacts with IFI44L; this interaction modulates the kinase activity of IKBKB and IKBKE. Interacts with IKBKB and IKBKE. Post-translationally, acetylation impairs ability to promote interaction between Akt/AKT1 and PHLPP1. Deacetylation by SIRT7 promotes interaction between Akt/AKT1 and PHLPP1, leading to suppress Akt/AKT1 activation. In terms of processing, ubiquitinated, leading to degradation in a proteasome-dependent manner. Deubiquitinated by USP49, leading to stabilization.

The protein localises to the cytoplasm. It localises to the nucleus. The enzyme catalyses [protein]-peptidylproline (omega=180) = [protein]-peptidylproline (omega=0). Its activity is regulated as follows. Inhibited by both FK506 and rapamycin. Functionally, immunophilin protein with PPIase and co-chaperone activities. Component of unligated steroid receptors heterocomplexes through interaction with heat-shock protein 90 (HSP90). Plays a role in the intracellular trafficking of heterooligomeric forms of steroid hormone receptors maintaining the complex into the cytoplasm when unliganded. Acts as a regulator of Akt/AKT1 activity by promoting the interaction between Akt/AKT1 and PHLPP1, thereby enhancing dephosphorylation and subsequent activation of Akt/AKT1. Interacts with IKBKE and IKBKB which facilitates IKK complex assembly leading to increased IKBKE and IKBKB kinase activity, NF-kappaB activation, and IFN production. The sequence is that of Peptidyl-prolyl cis-trans isomerase FKBP5 (FKBP5) from Saguinus oedipus (Cotton-top tamarin).